The chain runs to 169 residues: Ureidoglycolate lyase (169 aa).

It belongs to the ureidoglycolate lyase family. As to quaternary structure, homodimer. The cofactor is Ni(2+).

The enzyme catalyses (S)-ureidoglycolate = urea + glyoxylate. The protein operates within nitrogen metabolism; (S)-allantoin degradation. Functionally, catalyzes the catabolism of the allantoin degradation intermediate (S)-ureidoglycolate, generating urea and glyoxylate. Involved in the utilization of allantoin as nitrogen source. The sequence is that of Ureidoglycolate lyase from Brucella anthropi (strain ATCC 49188 / DSM 6882 / CCUG 24695 / JCM 21032 / LMG 3331 / NBRC 15819 / NCTC 12168 / Alc 37) (Ochrobactrum anthropi).